We begin with the raw amino-acid sequence, 146 residues long: Transcriptional regulator MraZ (146 aa).

2 SpoVT-AbrB domains span residues 5–52 (SAAL…PRAE) and 81–124 (AAEI…KEES).

The protein belongs to the MraZ family. As to quaternary structure, forms oligomers.

It is found in the cytoplasm. The protein localises to the nucleoid. The protein is Transcriptional regulator MraZ of Alcanivorax borkumensis (strain ATCC 700651 / DSM 11573 / NCIMB 13689 / SK2).